The chain runs to 305 residues: Protoheme IX farnesyltransferase (305 aa).

The next 9 membrane-spanning stretches (helical) occupy residues 31–51 (VMSL…YSVH), 52–72 (PFIA…AGAI), 96–118 (VIES…FFMA), 122–144 (NLLA…TIWL), 151–171 (NIVI…AAVS), 180–200 (ILFL…ALFC), 225–245 (ILIY…IGMN), 247–267 (FIYL…AGSL), and 281–301 (FAYS…TNTI).

Belongs to the UbiA prenyltransferase family. Protoheme IX farnesyltransferase subfamily.

It localises to the cell inner membrane. It carries out the reaction heme b + (2E,6E)-farnesyl diphosphate + H2O = Fe(II)-heme o + diphosphate. Its pathway is porphyrin-containing compound metabolism; heme O biosynthesis; heme O from protoheme: step 1/1. In terms of biological role, converts heme B (protoheme IX) to heme O by substitution of the vinyl group on carbon 2 of heme B porphyrin ring with a hydroxyethyl farnesyl side group. The polypeptide is Protoheme IX farnesyltransferase (Rickettsia peacockii (strain Rustic)).